Consider the following 62-residue polypeptide: Small ribosomal subunit protein uS14 (62 aa).

4 residues coordinate Zn(2+): Cys25, Cys28, Cys41, and Cys44.

Belongs to the universal ribosomal protein uS14 family. Zinc-binding uS14 subfamily. In terms of assembly, part of the 30S ribosomal subunit. Contacts proteins S3 and S10. It depends on Zn(2+) as a cofactor.

Its function is as follows. Binds 16S rRNA, required for the assembly of 30S particles and may also be responsible for determining the conformation of the 16S rRNA at the A site. The polypeptide is Small ribosomal subunit protein uS14 (Aquifex aeolicus (strain VF5)).